Here is a 426-residue protein sequence, read N- to C-terminus: Glutamate-1-semialdehyde 2,1-aminomutase (426 aa).

Lysine 267 is modified (N6-(pyridoxal phosphate)lysine).

This sequence belongs to the class-III pyridoxal-phosphate-dependent aminotransferase family. HemL subfamily. As to quaternary structure, homodimer. Pyridoxal 5'-phosphate serves as cofactor.

It localises to the cytoplasm. It carries out the reaction (S)-4-amino-5-oxopentanoate = 5-aminolevulinate. It participates in porphyrin-containing compound metabolism; protoporphyrin-IX biosynthesis; 5-aminolevulinate from L-glutamyl-tRNA(Glu): step 2/2. The protein is Glutamate-1-semialdehyde 2,1-aminomutase of Bdellovibrio bacteriovorus (strain ATCC 15356 / DSM 50701 / NCIMB 9529 / HD100).